A 128-amino-acid chain; its full sequence is Fluoride-specific ion channel FluC (128 aa).

Helical transmembrane passes span 4–24 (LLLA…RYLI), 39–59 (GTLI…EFSM), 71–91 (FLTT…YETI), and 99–119 (ITLG…FVVI). Glycine 78 and threonine 81 together coordinate Na(+).

Belongs to the fluoride channel Fluc/FEX (TC 1.A.43) family.

It localises to the cell membrane. The enzyme catalyses fluoride(in) = fluoride(out). Its activity is regulated as follows. Na(+) is not transported, but it plays an essential structural role and its presence is essential for fluoride channel function. Fluoride-specific ion channel. Important for reducing fluoride concentration in the cell, thus reducing its toxicity. The sequence is that of Fluoride-specific ion channel FluC from Clostridium perfringens (strain ATCC 13124 / DSM 756 / JCM 1290 / NCIMB 6125 / NCTC 8237 / Type A).